Consider the following 163-residue polypeptide: EF-hand calcium-binding domain-containing protein 11 (163 aa).

EF-hand domains lie at 18 to 53 (SEHR…LFGY), 91 to 126 (RYRN…VAPK), and 127 to 162 (LPER…GQKE). Asp140, Asp142, Asp144, His146, and Asp151 together coordinate Ca(2+).

The polypeptide is EF-hand calcium-binding domain-containing protein 11 (EFCAB11) (Homo sapiens (Human)).